A 1454-amino-acid polypeptide reads, in one-letter code: Coiled-coil domain-containing protein 18 (1454 aa).

Serine 45 carries the phosphoserine modification. 4 coiled-coil regions span residues 107 to 138 (APVD…HSLM), 170 to 402 (ILEE…ISQL), 438 to 464 (KLVI…NLTA), and 508 to 1309 (TMNK…SGHE). Residues 828 to 851 (QKQRESSAEKLRKMEEKCESAAHE) form a disordered region. At serine 1355 the chain carries Phosphoserine.

It localises to the cytoplasm. Its subcellular location is the cytoskeleton. The protein resides in the microtubule organizing center. It is found in the centrosome. The protein localises to the centriolar satellite. The sequence is that of Coiled-coil domain-containing protein 18 (CCDC18) from Homo sapiens (Human).